Consider the following 505-residue polypeptide: MTNTNNEYVLIAGSISKNTEKLYIDRAHSFVRALTKSILDANVGLVVYLAGEPVNENGALLTFDWTIVKEAVDLMENYTPAHQLKIVTSRSAMREKMSEENRMLIRKLQVARFADVSYLDDDLITGGNIGSEQVDAATAMIALGGGKGVSDRASKMRKANHPILPFDLELGGICDDGKGALGLHAHFYAEPLSMFPCTGEAVKNQLDTLSLQEPYYGLERLSEIAVELLKAEWAAQQLLHTPSVLILTALPVELAAAKKVFGIADDESPRLTSNGIHFWSTSIQRSDGPVTGIVASFASAGNVNASAITTMLLSEFKPQKVLMMGIAAGLREKMVLGEVIISERVIYYESAAALEGGKFAPRPEILCLHMPTKQNLNTYLATTSLSARLGERAQAIGLEMPVNSQAGDVAAGIIVSSATIASGELLIRDPALLERFRSLHDKACVAEMEAYGVFDACEKQGVPALIVRGISDFGDSTKDDAFHSIASVAAAIITADYLQHGWIRA.

Residues 1–229 (MTNTNNEYVL…RLSEIAVELL (229 aa)) form a cyclic oligonucleotide sensing-domain region. The tract at residues 239 to 505 (LHTPSVLILT…DYLQHGWIRA (267 aa)) is purine nucleoside phosphorylase domain.

Belongs to the Cap17 family.

The catalysed reaction is ATP + H2O = D-ribose 5-triphosphate + adenine. The enzyme catalyses dATP + H2O = 2-deoxyribose 5-triphosphate + adenine. In terms of biological role, effector protein with (d)ATP degrading activity of a CBASS antivirus system. CBASS (cyclic oligonucleotide-based antiphage signaling system) provides immunity against bacteriophage. A CD-NTase protein synthesizes cyclic nucleotides in response to infection; these serve as specific second messenger signals. The signals activate a diverse range of effectors, leading to bacterial cell death and thus abortive phage infection. A type III CBASS system. Expression of this CBASS system (Cap18-Cap6-Cap7-CdnC-CapW-Cap17) in a susceptible E.coli (strain MG1655) confers resistance to bacteriophage P1, leading to cell lysis. By 50 minutes post-infection, ATP levels are markedly reduced while dATP has been eliminated. The C-terminal purine nucleoside phosphorylase (PNP) domain cleaves the N-glycosidic bond of (d)ATP to release adenine and a sugar triphosphate; has no activity on other (d)NTPs, nor on DNA or RNA. In vivo during phage infection has pleoitropic effects on nucleotide accumulation. This protein may be activated by the cognate CD-NTase (CdnC). The chain is ATP nucleosidase Cap17 from Escherichia coli (strain KTE188).